A 740-amino-acid polypeptide reads, in one-letter code: Phosphoribosylformylglycinamidine synthase subunit PurL (740 aa).

Residue His-53 is part of the active site. The ATP site is built by Tyr-56 and Lys-95. Position 97 (Glu-97) interacts with Mg(2+). Residues 98–101 and Arg-120 each bind substrate; that span reads SHNH. Catalysis depends on His-99, which acts as the Proton acceptor. Asp-121 contacts Mg(2+). Position 244 (Gln-244) interacts with substrate. A Mg(2+)-binding site is contributed by Asp-272. Residue 316–318 participates in substrate binding; sequence ESQ. Residues Asp-497 and Gly-534 each contribute to the ATP site. Mg(2+) is bound at residue Asn-535. Ser-537 is a substrate binding site.

Belongs to the FGAMS family. Monomer. Part of the FGAM synthase complex composed of 1 PurL, 1 PurQ and 2 PurS subunits.

It is found in the cytoplasm. It carries out the reaction N(2)-formyl-N(1)-(5-phospho-beta-D-ribosyl)glycinamide + L-glutamine + ATP + H2O = 2-formamido-N(1)-(5-O-phospho-beta-D-ribosyl)acetamidine + L-glutamate + ADP + phosphate + H(+). The protein operates within purine metabolism; IMP biosynthesis via de novo pathway; 5-amino-1-(5-phospho-D-ribosyl)imidazole from N(2)-formyl-N(1)-(5-phospho-D-ribosyl)glycinamide: step 1/2. In terms of biological role, part of the phosphoribosylformylglycinamidine synthase complex involved in the purines biosynthetic pathway. Catalyzes the ATP-dependent conversion of formylglycinamide ribonucleotide (FGAR) and glutamine to yield formylglycinamidine ribonucleotide (FGAM) and glutamate. The FGAM synthase complex is composed of three subunits. PurQ produces an ammonia molecule by converting glutamine to glutamate. PurL transfers the ammonia molecule to FGAR to form FGAM in an ATP-dependent manner. PurS interacts with PurQ and PurL and is thought to assist in the transfer of the ammonia molecule from PurQ to PurL. The polypeptide is Phosphoribosylformylglycinamidine synthase subunit PurL (Rhodospirillum rubrum (strain ATCC 11170 / ATH 1.1.1 / DSM 467 / LMG 4362 / NCIMB 8255 / S1)).